A 904-amino-acid chain; its full sequence is DNA mismatch repair protein MutS (904 aa).

ATP is bound at residue Gly-655–Ser-662.

Belongs to the DNA mismatch repair MutS family.

Its function is as follows. This protein is involved in the repair of mismatches in DNA. It is possible that it carries out the mismatch recognition step. This protein has a weak ATPase activity. This chain is DNA mismatch repair protein MutS, found in Agrobacterium fabrum (strain C58 / ATCC 33970) (Agrobacterium tumefaciens (strain C58)).